A 62-amino-acid polypeptide reads, in one-letter code: uncharacterized protein (62 aa).

This is an uncharacterized protein from Sinorhizobium fredii (strain NBRC 101917 / NGR234).